Reading from the N-terminus, the 1215-residue chain is RNA-dependent RNA polymerase 1 (1215 aa).

Belongs to the RdRP family. In terms of assembly, cid12, hrr1 and rdp1 interact forming the RNA-directed RNA polymerase complex (RDRC). The RDRC complex interacts with the RITS complex via interaction between ago1 and hrr1. Clr4 has a role in mediating this interaction.

It is found in the cytoplasm. Its subcellular location is the nucleus. The protein localises to the chromosome. It localises to the telomere. The protein resides in the centromere. The catalysed reaction is RNA(n) + a ribonucleoside 5'-triphosphate = RNA(n+1) + diphosphate. In terms of biological role, has a role in the RNA interference (RNAi) pathway which is important for heterochromatin formation, accurate chromosome segregation, centromere cohesion and telomere function during mitosis and meiosis. Required for both post-transcriptional and transcriptional gene silencing. Required for silencing at the centromeres and for initiation of transcriptionally silent heterochromatin at the mating type locus. Promotes histone H3 'Lys-10' methylation necessary for centromere function. Required for recruitment of swi6 and cohesin to an ectopic dg repeat. A member of the RNA-directed RNA polymerase complex (RDRC) which is involved in the generation of small interfering RNAs (siRNAs) and mediates their association with the RNA-induced transcriptional silencing (RITS) complex. RITS acts as a priming complex for dsRNA synthesis at the site of non-coding centromeric RNA. Its RNA-dependent RNA polymerase activity is critical in siRNA production necessary for heterochromatin formation. The sequence is that of RNA-dependent RNA polymerase 1 (rdp1) from Schizosaccharomyces pombe (strain 972 / ATCC 24843) (Fission yeast).